A 277-amino-acid chain; its full sequence is MINKLNIVSGFKEGRSYLKDAFFTRPFRIADIKEDKTDPSLYLMLMSSSPGILDNDHYDINIQIESESRLMLESQSYQRLFNMQNGAVQQMNVSLADKSTFSYVQHPIVPHEQSIFKAYNVFNLTDNCSLTVGEIITCGRKHSGEVFLFSKFQNLTEVFHNGKLVVKDNVLLQPLLADVQTLGQMEGFTHQATLMYINTGIEDVESCIELAYAELQSEENIAFGVSKPFANGMIVRVLGNGGEQLYNAFRKIQRKLWIAEEKLNIKSQVTDLAENYI.

The protein belongs to the UreD family. As to quaternary structure, ureD, UreF and UreG form a complex that acts as a GTP-hydrolysis-dependent molecular chaperone, activating the urease apoprotein by helping to assemble the nickel containing metallocenter of UreC. The UreE protein probably delivers the nickel.

It is found in the cytoplasm. Functionally, required for maturation of urease via the functional incorporation of the urease nickel metallocenter. The sequence is that of Urease accessory protein UreD from Flavobacterium johnsoniae (strain ATCC 17061 / DSM 2064 / JCM 8514 / BCRC 14874 / CCUG 350202 / NBRC 14942 / NCIMB 11054 / UW101) (Cytophaga johnsonae).